We begin with the raw amino-acid sequence, 371 residues long: tRNA-specific 2-thiouridylase MnmA (371 aa).

ATP is bound by residues 13–20 (GMSGGVDS) and Met39. The interaction with target base in tRNA stretch occupies residues 99 to 101 (NPD). Cys104 (nucleophile) is an active-site residue. A disulfide bond links Cys104 and Cys200. An ATP-binding site is contributed by Gly128. The interval 150–152 (KDQ) is interaction with tRNA. Catalysis depends on Cys200, which acts as the Cysteine persulfide intermediate. The interval 308–309 (RY) is interaction with tRNA.

It belongs to the MnmA/TRMU family.

The protein localises to the cytoplasm. The enzyme catalyses S-sulfanyl-L-cysteinyl-[protein] + uridine(34) in tRNA + AH2 + ATP = 2-thiouridine(34) in tRNA + L-cysteinyl-[protein] + A + AMP + diphosphate + H(+). Its function is as follows. Catalyzes the 2-thiolation of uridine at the wobble position (U34) of tRNA, leading to the formation of s(2)U34. This is tRNA-specific 2-thiouridylase MnmA from Bacillus cytotoxicus (strain DSM 22905 / CIP 110041 / 391-98 / NVH 391-98).